We begin with the raw amino-acid sequence, 59 residues long: Potassium channel toxin alpha-KTx 15.2 (59 aa).

The N-terminal stretch at 1 to 22 (MKFSSIILLTLLICSMSKFGNC) is a signal peptide. The residue at position 23 (Q23) is a Pyrrolidone carboxylic acid. Intrachain disulfides connect C30–C50, C35–C55, and C39–C57.

The protein belongs to the short scorpion toxin superfamily. Potassium channel inhibitor family. Alpha-KTx 15 subfamily. In terms of tissue distribution, expressed by the venom gland.

It is found in the secreted. In terms of biological role, blocks both human ERG1/Kv11.1/KCNH2 potassium channels (in a reversible manner) and A-type voltage-gated potassium channels Kv4/KCND (in an irreversible manner). The presence of the Kv4-associated proteins DPP6 or DPP10 is mandatory to have high-affinity blockade of Kv4.2/KCND2 and Kv4.3/KCND3 channels. In contrast, the presence of the Kv4-associated protein KChIP1/KCNIP1 does not enhance the affinity blockade. May dispose of two functional faces (A and B); the two basic residues (Arg-40 and Lys-41) on the alpha-helix side of the peptide that blocks the hERG current (face A) and the typical dyad through which it blocks A-type currents on the beta-sheet side (face B). In adult rat brain, it binds to sites in the striatum, hippocampus, superior colliculus, and cerebellum. It shares the same target in rat brain than AaTX1 (AC Q867F4) and AmmTX3 (AC P60208). In DPP6 knockout mice, A-type currents are much less affected by the toxin than in wild-type mice. The chain is Potassium channel toxin alpha-KTx 15.2 from Olivierus martensii (Manchurian scorpion).